The sequence spans 438 residues: Methylenetetrahydrofolate--tRNA-(uracil-5-)-methyltransferase TrmFO (438 aa).

10–15 (GGGLAG) contacts FAD.

The protein belongs to the MnmG family. TrmFO subfamily. Requires FAD as cofactor.

It localises to the cytoplasm. It catalyses the reaction uridine(54) in tRNA + (6R)-5,10-methylene-5,6,7,8-tetrahydrofolate + NADH + H(+) = 5-methyluridine(54) in tRNA + (6S)-5,6,7,8-tetrahydrofolate + NAD(+). The catalysed reaction is uridine(54) in tRNA + (6R)-5,10-methylene-5,6,7,8-tetrahydrofolate + NADPH + H(+) = 5-methyluridine(54) in tRNA + (6S)-5,6,7,8-tetrahydrofolate + NADP(+). Its function is as follows. Catalyzes the folate-dependent formation of 5-methyl-uridine at position 54 (M-5-U54) in all tRNAs. This Trichormus variabilis (strain ATCC 29413 / PCC 7937) (Anabaena variabilis) protein is Methylenetetrahydrofolate--tRNA-(uracil-5-)-methyltransferase TrmFO.